Reading from the N-terminus, the 164-residue chain is Peptidyl-prolyl cis-trans isomerase B (164 aa).

In terms of domain architecture, PPIase cyclophilin-type spans 1–162 (MVTFHTNHGD…EDVIIESVTV (162 aa)).

Belongs to the cyclophilin-type PPIase family.

Its subcellular location is the cytoplasm. It carries out the reaction [protein]-peptidylproline (omega=180) = [protein]-peptidylproline (omega=0). Inhibition by cyclosporin A with a Ki of 25 to 50 mu-mol, a concentration 1000-fold higher than that required for eukaryotic PPIases. Its function is as follows. PPIases accelerate the folding of proteins. It catalyzes the cis-trans isomerization of proline imidic peptide bonds in oligopeptides. The polypeptide is Peptidyl-prolyl cis-trans isomerase B (ppiB) (Escherichia coli (strain K12)).